The chain runs to 68 residues: Neuronal regeneration-related protein (68 aa).

A disordered region spans residues 21-54; the sequence is MEGRLPKGRLPVPKEVNRKKNDETNAASLTPLGS. The span at 44–54 shows a compositional bias: polar residues; it reads TNAASLTPLGS.

In terms of assembly, interacts with the latency-associated peptides (LAP) of TGFB1 and TGFB2; the interaction results in a decrease in TGFB autoinduction. Interacts with FLNA. Post-translationally, phosphorylated on Ser-59. Phosphorylation decreases stability and activity.

The protein localises to the cytoplasm. May have roles in neural function and cellular differentiation. Ectopic expression promotes axonal regeneration, induces differentiation of fibroblast into myofibroblast, induces myofibroblast ameboid migration, augments motility of gliomas, and increases retinoic-acid regulation of lipid-droplet biogenesis. Down-regulates the expression of TGFB1 and TGFB2 but not of TGFB3. May play a role in the regulation of alveolar generation. This is Neuronal regeneration-related protein (NREP) from Pongo abelii (Sumatran orangutan).